The chain runs to 757 residues: MVGTINESMQNMKIGAKETAQSAKQGIKNAGQSSSKTARDVMGNPVPGSYTAGNTANDGDSSYASSKNLPGNADIGATSSERTAYAAPQRAAVDTSNVSPPSTQTGGYASKDTTSTYEGAQPLSSQSSRSSNYTNVKITATQNNVDALTGAPIRIVTTTNARIQPDEKTLQDLLEQRQVALREAREAEEELQRARQYNDRSTSEALELEARAKKAAQDAELASERAREAQSSIERSASLREKQAREEAERAATALREAELKHRLAQANADVDVANSKLDIALKNEAAWKAERESSLAHQKAVIDSARAELERARHEAAVADATYKKEHYEYNALVAELEERNDNTLRTASIREAEARNLEVHMEDTLKDARMRSRNATEQVEVVKREINSEIDVYRSSVEKTKAELASYQKGLPSQKEACDRELDDATRALQAAFQDRFNAAKLRVNQFDVDSRQQLAMLTKKVRDAEDAEEKYRISCHQREEEITRCATQAYDAVKAAEKRNETIAEAARAKENEAKDLYSKAESITQDLNAKRSHPPQPANLDYSSAIQRAQERLTLEESKLTDLRTAEPSQYVNDVEVARRALRDAQAEQSKVESEYNSVKGSKLYTTEPVHPHAVTTNEPTDVSTKSKSAAYHYPATTETVSSKAARSATTPAYVGGATKTPSTTKAVESTPSTLPTSASTNAAATTTTKKPKAAKSTAVRDDVSSASSDSDKGTTGLGKSESKSSRKERRSSTSSGHGLMNNVRHALGMSNK.

4 stretches are compositionally biased toward polar residues: residues 1–11 (MVGTINESMQN), 19–36 (TAQS…SSSK), 51–69 (TAGN…SKNL), and 94–118 (DTSN…STYE). Disordered regions lie at residues 1–131 (MVGT…SRSS), 224–244 (ERAR…EKQA), 589–633 (AQAE…KSKS), and 657–757 (AYVG…MSNK). Residues 166–604 (DEKTLQDLLE…KVESEYNSVK (439 aa)) are a coiled coil. The segment covering 589 to 598 (AQAEQSKVES) has biased composition (basic and acidic residues). A compositionally biased stretch (polar residues) spans 619–632 (VTTNEPTDVSTKSK). A compositionally biased stretch (low complexity) spans 674–693 (STPSTLPTSASTNAAATTTT). An ATP-binding site is contributed by 718-725 (GTTGLGKS).

In terms of biological role, may be involved in the metabolism of very long-chain fatty acid-containing phospholipids (VLCFA-PL). The chain is Protein lsd90 (lsd90) from Schizosaccharomyces pombe (strain 972 / ATCC 24843) (Fission yeast).